The chain runs to 332 residues: Putative threonine dehydratase (332 aa).

Lysine 56 is modified (N6-(pyridoxal phosphate)lysine).

It belongs to the serine/threonine dehydratase family. Pyridoxal 5'-phosphate serves as cofactor.

The enzyme catalyses L-threonine = 2-oxobutanoate + NH4(+). Its pathway is amino-acid biosynthesis; L-isoleucine biosynthesis; 2-oxobutanoate from L-threonine: step 1/1. This Sinorhizobium fredii (strain NBRC 101917 / NGR234) protein is Putative threonine dehydratase.